The following is a 210-amino-acid chain: 23.5 kDa heat shock protein, mitochondrial (210 aa).

A mitochondrion-targeting transit peptide spans 1 to 20 (MASSSALALRRLLSSSTVAV). A sHSP domain is found at 102 to 210 (MGASGVRRGW…RNNIRHINVD (109 aa)).

It belongs to the small heat shock protein (HSP20) family. As to quaternary structure, may form oligomeric structures.

The protein resides in the mitochondrion. The protein is 23.5 kDa heat shock protein, mitochondrial (HSP23.5) of Arabidopsis thaliana (Mouse-ear cress).